The primary structure comprises 420 residues: Protein translocase subunit SecY (420 aa).

10 helical membrane passes run 9–29, 61–81, 104–124, 141–161, 173–193, 203–223, 257–277, 300–320, 355–375, and 377–397; these read ILIT…PIPG, LSII…MELL, IVRY…SVGL, VFMI…MWIG, ISLI…SGTF, ILML…IIYV, LSGV…STIL, YNIL…SIVF, KLTL…WILV, and AMGV…QVAI.

This sequence belongs to the SecY/SEC61-alpha family. In terms of assembly, component of the Sec protein translocase complex. Heterotrimer consisting of SecY, SecE and SecG subunits. The heterotrimers can form oligomers, although 1 heterotrimer is thought to be able to translocate proteins. Interacts with the ribosome. Interacts with SecDF, and other proteins may be involved. Interacts with SecA.

The protein localises to the cell inner membrane. The central subunit of the protein translocation channel SecYEG. Consists of two halves formed by TMs 1-5 and 6-10. These two domains form a lateral gate at the front which open onto the bilayer between TMs 2 and 7, and are clamped together by SecE at the back. The channel is closed by both a pore ring composed of hydrophobic SecY resides and a short helix (helix 2A) on the extracellular side of the membrane which forms a plug. The plug probably moves laterally to allow the channel to open. The ring and the pore may move independently. This chain is Protein translocase subunit SecY, found in Helicobacter pylori (strain J99 / ATCC 700824) (Campylobacter pylori J99).